The following is a 46-amino-acid chain: DNA-directed RNA polymerase subunit Rpo12 (46 aa).

C8, C23, and C26 together coordinate Zn(2+).

Belongs to the archaeal Rpo12/eukaryotic RPC10 RNA polymerase subunit family. In terms of assembly, part of the RNA polymerase complex. Zn(2+) serves as cofactor.

Its subcellular location is the cytoplasm. The catalysed reaction is RNA(n) + a ribonucleoside 5'-triphosphate = RNA(n+1) + diphosphate. DNA-dependent RNA polymerase (RNAP) catalyzes the transcription of DNA into RNA using the four ribonucleoside triphosphates as substrates. This is DNA-directed RNA polymerase subunit Rpo12 from Archaeoglobus fulgidus (strain ATCC 49558 / DSM 4304 / JCM 9628 / NBRC 100126 / VC-16).